The primary structure comprises 274 residues: Dermonecrotic toxin SdSicTox-betaIIB1bix (274 aa).

Histidine 5 is a catalytic residue. Glutamate 25 and aspartate 27 together coordinate Mg(2+). Residue histidine 41 is the Nucleophile of the active site. Disulfide bonds link cysteine 45-cysteine 51 and cysteine 47-cysteine 190. Residue aspartate 85 coordinates Mg(2+).

The protein belongs to the arthropod phospholipase D family. Class II subfamily. Mg(2+) serves as cofactor. Expressed by the venom gland.

The protein resides in the secreted. The enzyme catalyses an N-(acyl)-sphingosylphosphocholine = an N-(acyl)-sphingosyl-1,3-cyclic phosphate + choline. The catalysed reaction is an N-(acyl)-sphingosylphosphoethanolamine = an N-(acyl)-sphingosyl-1,3-cyclic phosphate + ethanolamine. It carries out the reaction a 1-acyl-sn-glycero-3-phosphocholine = a 1-acyl-sn-glycero-2,3-cyclic phosphate + choline. It catalyses the reaction a 1-acyl-sn-glycero-3-phosphoethanolamine = a 1-acyl-sn-glycero-2,3-cyclic phosphate + ethanolamine. Dermonecrotic toxins cleave the phosphodiester linkage between the phosphate and headgroup of certain phospholipids (sphingolipid and lysolipid substrates), forming an alcohol (often choline) and a cyclic phosphate. This toxin acts on sphingomyelin (SM). It may also act on ceramide phosphoethanolamine (CPE), lysophosphatidylcholine (LPC) and lysophosphatidylethanolamine (LPE), but not on lysophosphatidylserine (LPS), and lysophosphatidylglycerol (LPG). It acts by transphosphatidylation, releasing exclusively cyclic phosphate products as second products. Induces dermonecrosis, hemolysis, increased vascular permeability, edema, inflammatory response, and platelet aggregation. In Sicarius cf. damarensis (strain GJB-2008) (Six-eyed sand spider), this protein is Dermonecrotic toxin SdSicTox-betaIIB1bix.